We begin with the raw amino-acid sequence, 360 residues long: Putative beta-glucosidase 15 (360 aa).

Basic and acidic residues-rich tracts occupy residues 1–11 and 47–67; these read MARRRMGEEGK and GRRE…ERKG. Disordered regions lie at residues 1 to 21 and 35 to 103; these read MARR…NGRQ and GWRS…RAER. A compositionally biased stretch (basic residues) spans 75 to 86; the sequence is GKRRRERRRGGR. Y183 is an a beta-D-glucoside binding site. C191 and C196 are oxidised to a cystine. Residues E254, W301, 308-309, and F317 contribute to the a beta-D-glucoside site; that span reads EW. The Nucleophile role is filled by E254. N-linked (GlcNAc...) asparagine glycosylation occurs at N346.

Belongs to the glycosyl hydrolase 1 family.

The enzyme catalyses Hydrolysis of terminal, non-reducing beta-D-glucosyl residues with release of beta-D-glucose.. The polypeptide is Putative beta-glucosidase 15 (BGLU15) (Oryza sativa subsp. japonica (Rice)).